A 120-amino-acid chain; its full sequence is Large ribosomal subunit protein uL18 (120 aa).

The protein belongs to the universal ribosomal protein uL18 family. In terms of assembly, part of the 50S ribosomal subunit; part of the 5S rRNA/L5/L18/L25 subcomplex. Contacts the 5S and 23S rRNAs.

Functionally, this is one of the proteins that bind and probably mediate the attachment of the 5S RNA into the large ribosomal subunit, where it forms part of the central protuberance. This chain is Large ribosomal subunit protein uL18, found in Chloroflexus aurantiacus (strain ATCC 29364 / DSM 637 / Y-400-fl).